Reading from the N-terminus, the 134-residue chain is Large ribosomal subunit protein bL17 (134 aa).

It belongs to the bacterial ribosomal protein bL17 family. In terms of assembly, part of the 50S ribosomal subunit. Contacts protein L32.

The chain is Large ribosomal subunit protein bL17 from Anaplasma marginale (strain Florida).